Here is a 361-residue protein sequence, read N- to C-terminus: 3-dehydroquinate synthase (361 aa).

NAD(+) contacts are provided by residues 72–77 (SGEKEK), 130–131 (TT), lysine 142, and lysine 151. Zn(2+) is bound by residues glutamate 184, histidine 247, and histidine 264.

Belongs to the sugar phosphate cyclases superfamily. Dehydroquinate synthase family. Co(2+) is required as a cofactor. The cofactor is Zn(2+). It depends on NAD(+) as a cofactor.

The protein resides in the cytoplasm. The catalysed reaction is 7-phospho-2-dehydro-3-deoxy-D-arabino-heptonate = 3-dehydroquinate + phosphate. It functions in the pathway metabolic intermediate biosynthesis; chorismate biosynthesis; chorismate from D-erythrose 4-phosphate and phosphoenolpyruvate: step 2/7. In terms of biological role, catalyzes the conversion of 3-deoxy-D-arabino-heptulosonate 7-phosphate (DAHP) to dehydroquinate (DHQ). In Bacillus mycoides (strain KBAB4) (Bacillus weihenstephanensis), this protein is 3-dehydroquinate synthase.